A 319-amino-acid chain; its full sequence is Thiamine pyrophosphokinase (319 aa).

The residue at position 2 (S2) is an N-acetylserine.

Belongs to the thiamine pyrophosphokinase family. As to quaternary structure, homodimer.

It catalyses the reaction thiamine + ATP = thiamine diphosphate + AMP + H(+). It functions in the pathway cofactor biosynthesis; thiamine diphosphate biosynthesis; thiamine diphosphate from thiamine: step 1/1. Its function is as follows. Essential protein, it is the only enzyme in yeast capable of synthesizing thiamine pyrophosphate (TPP). This chain is Thiamine pyrophosphokinase, found in Saccharomyces cerevisiae (strain ATCC 204508 / S288c) (Baker's yeast).